A 396-amino-acid polypeptide reads, in one-letter code: Elongation factor Tu (396 aa).

The 197-residue stretch at lysine 10–lysine 206 folds into the tr-type G domain. The G1 stretch occupies residues glycine 19–threonine 26. Residue glycine 19–threonine 26 participates in GTP binding. Threonine 26 contributes to the Mg(2+) binding site. A G2 region spans residues glycine 60–serine 64. The interval aspartate 81 to glycine 84 is G3. Residues aspartate 81–histidine 85 and asparagine 136–aspartate 139 each bind GTP. The tract at residues asparagine 136–aspartate 139 is G4. The G5 stretch occupies residues serine 174–leucine 176.

Belongs to the TRAFAC class translation factor GTPase superfamily. Classic translation factor GTPase family. EF-Tu/EF-1A subfamily. Monomer.

It localises to the cytoplasm. It catalyses the reaction GTP + H2O = GDP + phosphate + H(+). In terms of biological role, GTP hydrolase that promotes the GTP-dependent binding of aminoacyl-tRNA to the A-site of ribosomes during protein biosynthesis. This Vesicomyosocius okutanii subsp. Calyptogena okutanii (strain HA) protein is Elongation factor Tu.